Consider the following 187-residue polypeptide: UPF0301 protein KPN78578_33170 (187 aa).

Belongs to the UPF0301 (AlgH) family.

The sequence is that of UPF0301 protein KPN78578_33170 from Klebsiella pneumoniae subsp. pneumoniae (strain ATCC 700721 / MGH 78578).